The following is a 199-amino-acid chain: V-set and transmembrane domain-containing protein 5 (199 aa).

The signal sequence occupies residues 1 to 27; sequence MRPPRCVGRTQGIPLGLLAFWVATARC. Residues 28-146 lie on the Extracellular side of the membrane; sequence LQSQGVSLYI…VSEIRYEDLH (119 aa). In terms of domain architecture, Ig-like C2-type spans 36 to 138; it reads YIPRSAINAT…QSGTILLHVS (103 aa). Asparagine 43, asparagine 87, and asparagine 101 each carry an N-linked (GlcNAc...) asparagine glycan. Residues 147–167 form a helical membrane-spanning segment; sequence FVAVFFALLAAVAVVLISLMW. At 168–199 the chain is on the cytoplasmic side; that stretch reads VCNQCAYKFQRKRRYKLRESTTEEIEMKDVEC. The tract at residues 169–185 is important for CDC42-dependent filopodia induction; sequence CNQCAYKFQRKRRYKLR.

In terms of assembly, can homooligomerize through cis interactions within the same cell membrane. N-glycosylated.

It is found in the cell membrane. Its subcellular location is the cell projection. The protein localises to the dendrite. It localises to the axon. Its function is as follows. Cell adhesion-like membrane protein of the central nervous system (CNS) which modulates both the position and complexity of central neurons by altering their membrane morphology and dynamics. Involved in the formation of neuronal dendrites and protrusions including dendritic filopodia. In synaptogenesis, regulates synapse formation by altering dendritic spine morphology and actin distribution. Promotes formation of unstable neuronal spines such as thin and branched types. Regulates neuronal morphogenesis and migration during cortical development in the brain. This chain is V-set and transmembrane domain-containing protein 5 (Vstm5), found in Rattus norvegicus (Rat).